Consider the following 343-residue polypeptide: Fructose-1,6-bisphosphatase class 1 (343 aa).

Mg(2+)-binding residues include E99, D121, L123, and D124. Substrate contacts are provided by residues 124–127 (DGSS), N218, Y250, and K283. Residue E289 participates in Mg(2+) binding.

It belongs to the FBPase class 1 family. As to quaternary structure, homotetramer. The cofactor is Mg(2+).

It localises to the cytoplasm. It carries out the reaction beta-D-fructose 1,6-bisphosphate + H2O = beta-D-fructose 6-phosphate + phosphate. It participates in carbohydrate biosynthesis; gluconeogenesis. The sequence is that of Fructose-1,6-bisphosphatase class 1 from Leptospira biflexa serovar Patoc (strain Patoc 1 / Ames).